The primary structure comprises 385 residues: MRILKSHPLLKIVNSYMIDSPQPANISYLWNFGSLLALCLGIQIVTGVTLAMHYTPSVLEAFNSVEHIMRDVNNGWLVRYLHANTASAFFFLVYLHIGRGLYYGSYKSPRTLTWAIGTVILIVMMATAFLGYVLPYGQMSLWGATVITNLMSAIPWIGQDIVEFIWGGFSVNNATLNRFFALHFLLPFVLAALALMHLIAMHDTVGSGNPLGISGNYDRLPFAPYFIFKDLVTIFIFFIVLSIFVFFMPNALGDSENYVMANPMQTPPAIVPEWYLLPFYAILRSIPNKLLGVIAMFSAILALMVMPITDLSKLRGVQFRPLSKVAFYIFVANFLVLMQIGAKHVETPFIELGQISTVLYFAHFFVIVPVVSLIENSLVELATKK.

The next 4 helical transmembrane spans lie at Phe-32–Met-52, Trp-76–Gly-98, Thr-113–Val-133, and Phe-179–Ile-199. Positions 82 and 96 each coordinate heme b. Residues His-183 and His-197 each contribute to the heme b site. Residue His-202 participates in a ubiquinone binding. Helical transmembrane passes span Phe-226 to Phe-246, Leu-290 to Asp-310, Leu-322 to Ala-342, and Phe-349 to Pro-369.

This sequence belongs to the cytochrome b family. As to quaternary structure, fungal cytochrome b-c1 complex contains 10 subunits; 3 respiratory subunits, 2 core proteins and 5 low-molecular weight proteins. Cytochrome b-c1 complex is a homodimer. The cofactor is heme b.

Its subcellular location is the mitochondrion inner membrane. In terms of biological role, component of the ubiquinol-cytochrome c reductase complex (complex III or cytochrome b-c1 complex) that is part of the mitochondrial respiratory chain. The b-c1 complex mediates electron transfer from ubiquinol to cytochrome c. Contributes to the generation of a proton gradient across the mitochondrial membrane that is then used for ATP synthesis. The protein is Cytochrome b (cob) of Aspergillus tubingensis.